The following is a 360-amino-acid chain: Ribosomal RNA large subunit methyltransferase M (360 aa).

S-adenosyl-L-methionine contacts are provided by residues S187, 220–223 (CPGG), D239, D259, and D276. K305 (proton acceptor) is an active-site residue.

This sequence belongs to the class I-like SAM-binding methyltransferase superfamily. RNA methyltransferase RlmE family. RlmM subfamily. Monomer.

It is found in the cytoplasm. The catalysed reaction is cytidine(2498) in 23S rRNA + S-adenosyl-L-methionine = 2'-O-methylcytidine(2498) in 23S rRNA + S-adenosyl-L-homocysteine + H(+). In terms of biological role, catalyzes the 2'-O-methylation at nucleotide C2498 in 23S rRNA. This Shewanella pealeana (strain ATCC 700345 / ANG-SQ1) protein is Ribosomal RNA large subunit methyltransferase M.